The following is a 1064-amino-acid chain: Bifunctional cytochrome P450/NADPH--P450 reductase ascE (1064 aa).

Positions 1–484 (MTELIPGPKG…LHGGAKKGSK (484 aa)) are cytochrome P450. Heme is bound at residue Cys411. An NADPH-P-450 reductase region spans residues 485–1064 (IDGPSSGASL…ANRYVTEIFA (580 aa)). Residues 504–644 (MTILYGSDSG…DFERWQDDQL (141 aa)) form the Flavodoxin-like domain. Residues 510–514 (SDSGT) and 588–620 (VYGC…KRIA) contribute to the FMN site. Residues 676-905 (VDADEATVQS…KPALRLFHPP (230 aa)) form the FAD-binding FR-type domain.

In the N-terminal section; belongs to the cytochrome P450 family. FAD serves as cofactor. Requires FMN as cofactor. The cofactor is heme.

The enzyme catalyses ilicicolin A + NADPH + O2 + H(+) = ilicicolin A epoxide + NADP(+) + H2O. It participates in secondary metabolite biosynthesis; terpenoid biosynthesis. Its function is as follows. Bifunctional cytochrome P450/NADPH--P450 reductase; part of the asc-1 gene cluster that mediates the biosynthesis both ascochlorin and ascofuranone, a strong inhibitor of cyanide-insensitive alternative oxidases and a promising drug candidate against African trypanosomiasis. The first step in the pathway is performed by the non-reducing polyketide synthase ascC that produces orsellinic acid by condensing acetyl-CoA with 3 malonyl-CoA units. Orsellinic acid is then prenylated by the prenyltransferase ascA to yield ilicicolinic acid B. Ilicicolinic acid B is further reduced to ilicicolin B by the reductase ascB. The halogenase ascD then chlorinates ilicicolin B to produce ilicicolin A which is converted to ilicicolin A epoxide by the cytochrome P450 monooxygenase ascE that catalyzes stereoselective epoxidation of the terminal double bond of the prenyl group. Ilicicolin A epoxide is the last common precursor for the biosynthesis of ascofuranone and ascochlorin. The terpene cyclase ascF produces a monocyclic terpene, and the cyclization reaction is proposed to be initiated by protonation of the terminal epoxide of ilicicolin A epoxide to generate a monocyclic tertiarycation, which is followed by a series of hydride and methyl shifts with abstraction of proton, leading to the formation of the (14S,15R,19R)-trimethylcyclohexanone ring structure of ilicicolin C, which is finally reduced to ascochlorin by the dehydrogenase ascG. On the other hand, ilicicolin A epoxide is hydroxylated by the cytochrome P450 monooxygenase ascH, and the resultant product is cyclized by the terpene cyclase ascI to ascofuranol via protonation-initiated epoxide ring opening, which facilitates the 6-endo-tet cyclization to form the tetrahy-drofuran ring. Finally, ascofuranol is oxidized into ascofuranone by ascJ. This Acremonium egyptiacum (Oospora egyptiaca) protein is Bifunctional cytochrome P450/NADPH--P450 reductase ascE.